The chain runs to 391 residues: Succinyl-diaminopimelate desuccinylase (391 aa).

Histidine 67 is a Zn(2+) binding site. Aspartate 69 is an active-site residue. Aspartate 101 serves as a coordination point for Zn(2+). Catalysis depends on glutamate 135, which acts as the Proton acceptor. Residues glutamate 136, glutamate 164, and histidine 353 each coordinate Zn(2+).

The protein belongs to the peptidase M20A family. DapE subfamily. Homodimer. It depends on Zn(2+) as a cofactor. Co(2+) is required as a cofactor.

The enzyme catalyses N-succinyl-(2S,6S)-2,6-diaminopimelate + H2O = (2S,6S)-2,6-diaminopimelate + succinate. The protein operates within amino-acid biosynthesis; L-lysine biosynthesis via DAP pathway; LL-2,6-diaminopimelate from (S)-tetrahydrodipicolinate (succinylase route): step 3/3. Its function is as follows. Catalyzes the hydrolysis of N-succinyl-L,L-diaminopimelic acid (SDAP), forming succinate and LL-2,6-diaminopimelate (DAP), an intermediate involved in the bacterial biosynthesis of lysine and meso-diaminopimelic acid, an essential component of bacterial cell walls. The polypeptide is Succinyl-diaminopimelate desuccinylase (Rickettsia bellii (strain OSU 85-389)).